Reading from the N-terminus, the 286-residue chain is 1D-myo-inositol 2-acetamido-2-deoxy-alpha-D-glucopyranoside deacetylase (286 aa).

The Zn(2+) site is built by H12, D15, and H147.

It belongs to the MshB deacetylase family. Zn(2+) is required as a cofactor.

It carries out the reaction 1D-myo-inositol 2-acetamido-2-deoxy-alpha-D-glucopyranoside + H2O = 1D-myo-inositol 2-amino-2-deoxy-alpha-D-glucopyranoside + acetate. Functionally, catalyzes the deacetylation of 1D-myo-inositol 2-acetamido-2-deoxy-alpha-D-glucopyranoside (GlcNAc-Ins) in the mycothiol biosynthesis pathway. The chain is 1D-myo-inositol 2-acetamido-2-deoxy-alpha-D-glucopyranoside deacetylase from Thermobifida fusca (strain YX).